We begin with the raw amino-acid sequence, 387 residues long: Capsid protein (387 aa).

The span at 1-33 (MARTKSKPRKRTTVRKARRSVKRRTTTKGTKRK) shows a compositional bias: basic residues. 2 disordered regions span residues 1–47 (MART…RGVA) and 365–387 (KSAKINDQLNNNQDAANKKREFN). 2 short sequence motifs (nuclear localization signal) span residues 8–15 (PRKRTTVR) and 30–37 (TKRKTAGD). The span at 370–379 (NDQLNNNQDA) shows a compositional bias: low complexity.

It is found in the host nucleus. The protein localises to the virion. Its function is as follows. Self-assembles to form the virion icosahedral capsid. This is Capsid protein from Chaetoceros protobacilladnavirus 2 (Chaetoceros sp. DNA virus 7).